The following is a 97-amino-acid chain: Exodeoxyribonuclease 7 small subunit (97 aa).

The tract at residues 1-22 (MAKTASPGDTAAGNGTEPLPDK) is disordered.

It belongs to the XseB family. In terms of assembly, heterooligomer composed of large and small subunits.

The protein resides in the cytoplasm. The enzyme catalyses Exonucleolytic cleavage in either 5'- to 3'- or 3'- to 5'-direction to yield nucleoside 5'-phosphates.. In terms of biological role, bidirectionally degrades single-stranded DNA into large acid-insoluble oligonucleotides, which are then degraded further into small acid-soluble oligonucleotides. The protein is Exodeoxyribonuclease 7 small subunit of Burkholderia vietnamiensis (strain G4 / LMG 22486) (Burkholderia cepacia (strain R1808)).